A 230-amino-acid polypeptide reads, in one-letter code: Somatolactin (230 aa).

Residues 1-23 form the signal peptide; sequence MNMMTVKQGVWAALLWPYLLAAS. 3 cysteine pairs are disulfide-bonded: Cys28–Cys38, Cys88–Cys204, and Cys221–Cys229. 2 N-linked (GlcNAc...) asparagine glycosylation sites follow: Asn137 and Asn144.

The protein belongs to the somatotropin/prolactin family.

The protein resides in the secreted. In Hippoglossus hippoglossus (Atlantic halibut), this protein is Somatolactin.